The chain runs to 262 residues: Indole-3-glycerol phosphate synthase (262 aa).

It belongs to the TrpC family.

It carries out the reaction 1-(2-carboxyphenylamino)-1-deoxy-D-ribulose 5-phosphate + H(+) = (1S,2R)-1-C-(indol-3-yl)glycerol 3-phosphate + CO2 + H2O. Its pathway is amino-acid biosynthesis; L-tryptophan biosynthesis; L-tryptophan from chorismate: step 4/5. The protein is Indole-3-glycerol phosphate synthase of Aromatoleum aromaticum (strain DSM 19018 / LMG 30748 / EbN1) (Azoarcus sp. (strain EbN1)).